The following is a 278-amino-acid chain: Small ribosomal subunit biogenesis GTPase RsgA (278 aa).

Residues 62–218 (KNELTRPRVA…ICDTPGFNVI (157 aa)) form the CP-type G domain. Residues 112–115 (TKTD) and 162–170 (GQSGVGKSS) contribute to the GTP site. Residues cysteine 241, cysteine 246, histidine 248, and cysteine 254 each coordinate Zn(2+).

The protein belongs to the TRAFAC class YlqF/YawG GTPase family. RsgA subfamily. Monomer. Associates with 30S ribosomal subunit, binds 16S rRNA. It depends on Zn(2+) as a cofactor.

It is found in the cytoplasm. In terms of biological role, one of several proteins that assist in the late maturation steps of the functional core of the 30S ribosomal subunit. Helps release RbfA from mature subunits. May play a role in the assembly of ribosomal proteins into the subunit. Circularly permuted GTPase that catalyzes slow GTP hydrolysis, GTPase activity is stimulated by the 30S ribosomal subunit. The polypeptide is Small ribosomal subunit biogenesis GTPase RsgA (Mycoplasma genitalium (strain ATCC 33530 / DSM 19775 / NCTC 10195 / G37) (Mycoplasmoides genitalium)).